Here is a 289-residue protein sequence, read N- to C-terminus: 4-diphosphocytidyl-2-C-methyl-D-erythritol kinase (289 aa).

K11 is a catalytic residue. Residue 95–105 (PMGGGIGGGSS) coordinates ATP. D137 is a catalytic residue.

It belongs to the GHMP kinase family. IspE subfamily.

It carries out the reaction 4-CDP-2-C-methyl-D-erythritol + ATP = 4-CDP-2-C-methyl-D-erythritol 2-phosphate + ADP + H(+). Its pathway is isoprenoid biosynthesis; isopentenyl diphosphate biosynthesis via DXP pathway; isopentenyl diphosphate from 1-deoxy-D-xylulose 5-phosphate: step 3/6. Functionally, catalyzes the phosphorylation of the position 2 hydroxy group of 4-diphosphocytidyl-2C-methyl-D-erythritol. In Aeromonas salmonicida (strain A449), this protein is 4-diphosphocytidyl-2-C-methyl-D-erythritol kinase.